The chain runs to 283 residues: Thymidylate synthase (283 aa).

DUMP is bound at residue Arg-22. The Nucleophile role is filled by Cys-160. DUMP is bound by residues 180 to 183 (RSCD), Asn-191, and 221 to 223 (HIY). Asp-183 serves as a coordination point for (6R)-5,10-methylene-5,6,7,8-tetrahydrofolate. Residue Ala-282 participates in (6R)-5,10-methylene-5,6,7,8-tetrahydrofolate binding.

Belongs to the thymidylate synthase family. Bacterial-type ThyA subfamily. Homodimer.

The protein localises to the cytoplasm. It catalyses the reaction dUMP + (6R)-5,10-methylene-5,6,7,8-tetrahydrofolate = 7,8-dihydrofolate + dTMP. It functions in the pathway pyrimidine metabolism; dTTP biosynthesis. Functionally, catalyzes the reductive methylation of 2'-deoxyuridine-5'-monophosphate (dUMP) to 2'-deoxythymidine-5'-monophosphate (dTMP) while utilizing 5,10-methylenetetrahydrofolate (mTHF) as the methyl donor and reductant in the reaction, yielding dihydrofolate (DHF) as a by-product. This enzymatic reaction provides an intracellular de novo source of dTMP, an essential precursor for DNA biosynthesis. This is Thymidylate synthase from Shewanella frigidimarina (strain NCIMB 400).